Reading from the N-terminus, the 247-residue chain is DNA repair protein RecO (247 aa).

The protein belongs to the RecO family.

In terms of biological role, involved in DNA repair and RecF pathway recombination. The chain is DNA repair protein RecO from Methylocella silvestris (strain DSM 15510 / CIP 108128 / LMG 27833 / NCIMB 13906 / BL2).